The sequence spans 174 residues: Crossover junction endodeoxyribonuclease RuvC (174 aa).

Residues aspartate 8, glutamate 67, and aspartate 139 contribute to the active site. Mg(2+)-binding residues include aspartate 8, glutamate 67, and aspartate 139.

Belongs to the RuvC family. Homodimer which binds Holliday junction (HJ) DNA. The HJ becomes 2-fold symmetrical on binding to RuvC with unstacked arms; it has a different conformation from HJ DNA in complex with RuvA. In the full resolvosome a probable DNA-RuvA(4)-RuvB(12)-RuvC(2) complex forms which resolves the HJ. Mg(2+) is required as a cofactor.

The protein localises to the cytoplasm. It carries out the reaction Endonucleolytic cleavage at a junction such as a reciprocal single-stranded crossover between two homologous DNA duplexes (Holliday junction).. Functionally, the RuvA-RuvB-RuvC complex processes Holliday junction (HJ) DNA during genetic recombination and DNA repair. Endonuclease that resolves HJ intermediates. Cleaves cruciform DNA by making single-stranded nicks across the HJ at symmetrical positions within the homologous arms, yielding a 5'-phosphate and a 3'-hydroxyl group; requires a central core of homology in the junction. The consensus cleavage sequence is 5'-(A/T)TT(C/G)-3'. Cleavage occurs on the 3'-side of the TT dinucleotide at the point of strand exchange. HJ branch migration catalyzed by RuvA-RuvB allows RuvC to scan DNA until it finds its consensus sequence, where it cleaves and resolves the cruciform DNA. In Ectopseudomonas mendocina (strain ymp) (Pseudomonas mendocina), this protein is Crossover junction endodeoxyribonuclease RuvC.